Consider the following 317-residue polypeptide: Protein KlaC (317 aa).

Its function is as follows. Belongs to the kla operon, which is associated with cryptic tellurite resistance, and IncW plasmid fertility inhibition. In Escherichia coli, this protein is Protein KlaC (klaC).